Reading from the N-terminus, the 522-residue chain is Putative malate dehydrogenase 1B (522 aa).

Positions 495-522 are disordered; that stretch reads EETEKSSSEDTPEAAAAAVSTGDETVPS.

Belongs to the LDH/MDH superfamily. MDH type 2 family.

The protein is Putative malate dehydrogenase 1B (MDH1B) of Branchiostoma floridae (Florida lancelet).